The chain runs to 233 residues: Chromosome partition protein MukE (233 aa).

The interval 207-233 (SLSLHDESDDADVTMGNAADSVEDEQE) is disordered.

It belongs to the MukE family. As to quaternary structure, interacts, and probably forms a ternary complex, with MukF and MukB. The complex formation is stimulated by calcium or magnesium.

It is found in the cytoplasm. The protein resides in the nucleoid. In terms of biological role, involved in chromosome condensation, segregation and cell cycle progression. May participate in facilitating chromosome segregation by condensation DNA from both sides of a centrally located replisome during cell division. Probably acts via its interaction with MukB and MukF. The protein is Chromosome partition protein MukE of Yersinia pestis.